A 382-amino-acid chain; its full sequence is MLLPWIITIVTVIPATLGHRNRVQDDEMLVISDSTDSLNLEDFEFADKLTREELFGKHIPVEVVNDFKSDIRLPRRHKRNGVSRAAKLWPNARIPYAISPHYSPHERALLAKAVKQYHEKTCIRFVPRQTGEPDYLFIGKVDGCFSEVGRTSGVQVLSLDNGCMEYATIIHEMMHVVGFYHEHERWDRDNFIDIIWQNIDRGALDQFGKVDLSKTSYYGQPYDYKSILHYDSLAFSKNGFPTMLPKVKSATIGNARDFSDVDISKINRMYNCPVEKSVTAPFARARHVPIYSPQYHKYEDRPKIPLRSFDMQQGPINPPMAQIPSQSLVVSSSSGRVNYNSNKPSSQCEDRITVCWWTADRCRSPAIYQVMSSLCPKTCKFC.

Positions 1–18 are cleaved as a signal peptide; that stretch reads MLLPWIITIVTVIPATLG. Residues 19 to 79 constitute a propeptide that is removed on maturation; sequence HRNRVQDDEM…DIRLPRRHKR (61 aa). The Peptidase M12A domain maps to 80–273; that stretch reads NGVSRAAKLW…SKINRMYNCP (194 aa). 5 disulfide bridges follow: cysteine 122–cysteine 272, cysteine 144–cysteine 163, cysteine 348–cysteine 382, cysteine 355–cysteine 375, and cysteine 362–cysteine 379. A Zn(2+)-binding site is contributed by histidine 171. Glutamate 172 is an active-site residue. The Zn(2+) site is built by histidine 175 and histidine 181. Residues 348 to 382 form the ShKT domain; it reads CEDRITVCWWTADRCRSPAIYQVMSSLCPKTCKFC.

It depends on Zn(2+) as a cofactor. In terms of tissue distribution, expressed in the head of adult hermaphrodites but not within pharynx cells. Expressed in pharyngeal muscles, mc cells, intestine, hypodermal seam cells, arcade cells, spermatheca, vulva and rectal epithelial cells.

Its subcellular location is the secreted. Its function is as follows. Metalloprotease. In Caenorhabditis elegans, this protein is Zinc metalloproteinase nas-7 (nas-7).